We begin with the raw amino-acid sequence, 262 residues long: 3-methyl-2-oxobutanoate hydroxymethyltransferase (262 aa).

Mg(2+) is bound by residues aspartate 43 and aspartate 82. 3-methyl-2-oxobutanoate contacts are provided by residues 43 to 44 (DS), aspartate 82, and lysine 111. Glutamate 113 lines the Mg(2+) pocket. The Proton acceptor role is filled by glutamate 180.

This sequence belongs to the PanB family. As to quaternary structure, homodecamer; pentamer of dimers. Mg(2+) is required as a cofactor.

The protein resides in the cytoplasm. The enzyme catalyses 3-methyl-2-oxobutanoate + (6R)-5,10-methylene-5,6,7,8-tetrahydrofolate + H2O = 2-dehydropantoate + (6S)-5,6,7,8-tetrahydrofolate. It functions in the pathway cofactor biosynthesis; (R)-pantothenate biosynthesis; (R)-pantoate from 3-methyl-2-oxobutanoate: step 1/2. In terms of biological role, catalyzes the reversible reaction in which hydroxymethyl group from 5,10-methylenetetrahydrofolate is transferred onto alpha-ketoisovalerate to form ketopantoate. The polypeptide is 3-methyl-2-oxobutanoate hydroxymethyltransferase (Wolinella succinogenes (strain ATCC 29543 / DSM 1740 / CCUG 13145 / JCM 31913 / LMG 7466 / NCTC 11488 / FDC 602W) (Vibrio succinogenes)).